The chain runs to 121 residues: Basic phospholipase A2 homolog (121 aa).

7 disulfide bridges follow: C26–C115, C28–C44, C43–C95, C49–C121, C50–C88, C57–C81, and C75–C86.

This sequence belongs to the phospholipase A2 family. Group II subfamily. K49 sub-subfamily. In terms of assembly, homodimer. As to expression, expressed by the venom gland.

It localises to the secreted. Its function is as follows. Snake venom phospholipase A2 homolog that lacks enzymatic activity, but has myotoxic and cytolytic activities. This is Basic phospholipase A2 homolog from Metlapilcoatlus nummifer (Mexican jumping pitviper).